Here is a 368-residue protein sequence, read N- to C-terminus: Probable deoxyhypusine synthase (368 aa).

NAD(+) contacts are provided by residues 100–104 (SNLVS), 126–128 (TAG), glutamate 132, and aspartate 233. Spermidine is bound at residue 131–132 (EE). Aspartate 238 contributes to the spermidine binding site. Glycine 278 provides a ligand contact to NAD(+). Histidine 283 serves as a coordination point for spermidine. 303–304 (TA) lines the NAD(+) pocket. Spermidine contacts are provided by residues 309-311 (GSD) and 318-324 (EAISWGK). Lysine 324 functions as the Nucleophile in the catalytic mechanism. 337 to 338 (EA) serves as a coordination point for NAD(+).

It belongs to the deoxyhypusine synthase family. NAD(+) serves as cofactor.

It catalyses the reaction [eIF5A protein]-L-lysine + spermidine = [eIF5A protein]-deoxyhypusine + propane-1,3-diamine. The protein operates within protein modification; eIF5A hypusination. Functionally, catalyzes the NAD-dependent oxidative cleavage of spermidine and the subsequent transfer of the butylamine moiety of spermidine to the epsilon-amino group of a specific lysine residue of the eIF-5A precursor protein to form the intermediate deoxyhypusine residue. In Drosophila melanogaster (Fruit fly), this protein is Probable deoxyhypusine synthase.